A 610-amino-acid polypeptide reads, in one-letter code: Alpha-fetoprotein (610 aa).

The N-terminal stretch at 1–18 is a signal peptide; sequence MKWVVSFFLLFLLNFSDS. Albumin domains follow at residues 19–210, 211–403, and 404–602; these read RTMH…TSIT, KELR…EELE, and KYIQ…ALIS. H22 contributes to the Cu(2+) binding site. 8 disulfide bridges follow: C99/C114, C113/C124, C148/C193, C192/C201, C224/C270, C269/C277, C289/C303, and C302/C314. Residues S111 and S115 each carry the phosphoserine modification. Residues N197 and N251 are each glycosylated (N-linked (GlcNAc...) asparagine). Position 345 is a phosphoserine (S345). 7 cysteine pairs are disulfide-bonded: C385-C394, C417-C463, C462-C473, C486-C502, C501-C512, C539-C584, and C583-C592. S445 bears the Phosphoserine mark.

Belongs to the ALB/AFP/VDB family. In terms of assembly, dimeric and trimeric forms have been found in addition to the monomeric form. In terms of processing, sulfated. Plasma.

The protein localises to the secreted. Functionally, binds copper, nickel, and fatty acids as well as, and bilirubin less well than, serum albumin. This Bos taurus (Bovine) protein is Alpha-fetoprotein (AFP).